The sequence spans 273 residues: Ribosomal RNA small subunit methyltransferase A (273 aa).

Positions 20, 22, 47, 68, 90, and 110 each coordinate S-adenosyl-L-methionine.

The protein belongs to the class I-like SAM-binding methyltransferase superfamily. rRNA adenine N(6)-methyltransferase family. RsmA subfamily.

It is found in the cytoplasm. It catalyses the reaction adenosine(1518)/adenosine(1519) in 16S rRNA + 4 S-adenosyl-L-methionine = N(6)-dimethyladenosine(1518)/N(6)-dimethyladenosine(1519) in 16S rRNA + 4 S-adenosyl-L-homocysteine + 4 H(+). Its function is as follows. Specifically dimethylates two adjacent adenosines (A1518 and A1519) in the loop of a conserved hairpin near the 3'-end of 16S rRNA in the 30S particle. May play a critical role in biogenesis of 30S subunits. The sequence is that of Ribosomal RNA small subunit methyltransferase A from Chlorobium luteolum (strain DSM 273 / BCRC 81028 / 2530) (Pelodictyon luteolum).